The sequence spans 249 residues: Adenylate kinase (249 aa).

ATP is bound at residue 43 to 48 (GAGKGT). The interval 63–92 (ATGDMLRAQVAAKSALGVEAKKIMDQGGLV) is NMP. AMP-binding positions include threonine 64, arginine 69, 90 to 92 (GLV), 119 to 122 (GFPR), and glutamine 126. The LID stretch occupies residues 160–197 (GRLVHPASGRSYHKLFNPPKKDMIDDVSGDALVQRSDD). Residues arginine 161 and 170-171 (SY) each bind ATP. 2 residues coordinate AMP: arginine 194 and arginine 205. Residue glutamine 233 participates in ATP binding.

This sequence belongs to the adenylate kinase family. AK2 subfamily. As to quaternary structure, monomer.

The protein resides in the cytoplasm. It localises to the cytosol. The protein localises to the mitochondrion intermembrane space. The enzyme catalyses AMP + ATP = 2 ADP. Its function is as follows. Catalyzes the reversible transfer of the terminal phosphate group between ATP and AMP. Plays an important role in cellular energy homeostasis and in adenine nucleotide metabolism. Adenylate kinase activity is critical for regulation of the phosphate utilization and the AMP de novo biosynthesis pathways. The protein is Adenylate kinase of Debaryomyces hansenii (strain ATCC 36239 / CBS 767 / BCRC 21394 / JCM 1990 / NBRC 0083 / IGC 2968) (Yeast).